Reading from the N-terminus, the 138-residue chain is Ribosome-binding factor A (138 aa).

A disordered region spans residues 119 to 138; that stretch reads RSPEVQRDLGPSNEKDDEQN.

The protein belongs to the RbfA family. As to quaternary structure, monomer. Binds 30S ribosomal subunits, but not 50S ribosomal subunits or 70S ribosomes.

Its subcellular location is the cytoplasm. One of several proteins that assist in the late maturation steps of the functional core of the 30S ribosomal subunit. Associates with free 30S ribosomal subunits (but not with 30S subunits that are part of 70S ribosomes or polysomes). Required for efficient processing of 16S rRNA. May interact with the 5'-terminal helix region of 16S rRNA. This Agrobacterium fabrum (strain C58 / ATCC 33970) (Agrobacterium tumefaciens (strain C58)) protein is Ribosome-binding factor A.